The chain runs to 348 residues: Dihydroorotase (348 aa).

Zn(2+)-binding residues include H17 and H19. Residues 19–21 (HLR) and N45 contribute to the substrate site. 3 residues coordinate Zn(2+): K103, H140, and H178. Residue K103 is modified to N6-carboxylysine. H140 lines the substrate pocket. L223 contacts substrate. Residue D251 participates in Zn(2+) binding. The active site involves D251. Positions 255 and 267 each coordinate substrate.

This sequence belongs to the metallo-dependent hydrolases superfamily. DHOase family. Class II DHOase subfamily. As to quaternary structure, homodimer. Zn(2+) serves as cofactor.

It carries out the reaction (S)-dihydroorotate + H2O = N-carbamoyl-L-aspartate + H(+). The protein operates within pyrimidine metabolism; UMP biosynthesis via de novo pathway; (S)-dihydroorotate from bicarbonate: step 3/3. Its function is as follows. Catalyzes the reversible cyclization of carbamoyl aspartate to dihydroorotate. In Escherichia coli O139:H28 (strain E24377A / ETEC), this protein is Dihydroorotase.